The sequence spans 615 residues: 3-(3-hydroxy-phenyl)propionate/3-hydroxycinnamic acid hydroxylase 1 (615 aa).

Residues 1 to 20 (MRPAFEPAAGLGRAHPHETT) are disordered. Residues 27–56 (DVAIIGAGPVGLMIANILGLQGVRVVVVEK) and 294–304 (FRVKRILLAGD) contribute to the FAD site.

It belongs to the PheA/TfdB FAD monooxygenase family. The cofactor is FAD.

It carries out the reaction 3-(3-hydroxyphenyl)propanoate + NADH + O2 + H(+) = 3-(2,3-dihydroxyphenyl)propanoate + NAD(+) + H2O. The catalysed reaction is (2E)-3-(3-hydroxyphenyl)prop-2-enoate + NADH + O2 + H(+) = (2E)-3-(2,3-dihydroxyphenyl)prop-2-enoate + NAD(+) + H2O. It participates in aromatic compound metabolism; 3-phenylpropanoate degradation. Its function is as follows. Catalyzes the insertion of one atom of molecular oxygen into position 2 of the phenyl ring of 3-(3-hydroxyphenyl)propionate (3-HPP) and hydroxycinnamic acid (3HCI). This chain is 3-(3-hydroxy-phenyl)propionate/3-hydroxycinnamic acid hydroxylase 1, found in Burkholderia vietnamiensis (strain G4 / LMG 22486) (Burkholderia cepacia (strain R1808)).